The sequence spans 344 residues: Inositol 2-dehydrogenase/D-chiro-inositol 3-dehydrogenase (344 aa).

This sequence belongs to the Gfo/Idh/MocA family. Homotetramer.

The enzyme catalyses myo-inositol + NAD(+) = scyllo-inosose + NADH + H(+). The catalysed reaction is 1D-chiro-inositol + NAD(+) = scyllo-inosine + NADH + H(+). It participates in polyol metabolism; myo-inositol degradation into acetyl-CoA; acetyl-CoA from myo-inositol: step 1/7. Involved in the oxidation of myo-inositol (MI) and D-chiro-inositol (DCI) to 2-keto-myo-inositol (2KMI or 2-inosose) and 1-keto-D-chiro-inositol (1KDCI), respectively. Can also use D-glucose and D-xylose, and shows a trace of activity with D-ribose and D-fructose. The chain is Inositol 2-dehydrogenase/D-chiro-inositol 3-dehydrogenase (iolG) from Bacillus subtilis (strain 168).